The primary structure comprises 619 residues: Probable serine/threonine-protein kinase WNK8 (619 aa).

Positions 1–14 (MSGARRCGDRRSER) are enriched in basic and acidic residues. The disordered stretch occupies residues 1-30 (MSGARRCGDRRSERSSVVGDNRNGYVETDP). The Protein kinase domain maps to 35-291 (GRLSEVLGKG…AEELLLDPFL (257 aa)). ATP contacts are provided by residues 115-118 (TELF) and lysine 163. Aspartate 180 acts as the Proton acceptor in catalysis. 4 disordered regions span residues 293-335 (PPQN…AKTT), 419-464 (YADD…PGPH), 508-555 (CSAS…SMVD), and 585-619 (GFRD…HYMF). Positions 419 to 428 (YADDDDDDDV) are enriched in acidic residues. Residues 439–448 (SSSPTSSQGS) are compositionally biased toward low complexity. The segment covering 602–619 (QHRRRSSSKVDHKHHYMF) has biased composition (basic residues).

Belongs to the protein kinase superfamily. Ser/Thr protein kinase family. WNK subfamily.

It catalyses the reaction L-seryl-[protein] + ATP = O-phospho-L-seryl-[protein] + ADP + H(+). The catalysed reaction is L-threonyl-[protein] + ATP = O-phospho-L-threonyl-[protein] + ADP + H(+). This is Probable serine/threonine-protein kinase WNK8 (WNK8) from Oryza sativa subsp. japonica (Rice).